The chain runs to 355 residues: uncharacterized protein (355 aa).

The transit peptide at 1-49 (MPMTVVSGRFSTALLPTCFSLSRLHSVKYAAQRRVVFVSRSAHASSASV) directs the protein to the chloroplast.

It belongs to the methyltransferase superfamily.

The protein localises to the plastid. It localises to the chloroplast. Its subcellular location is the plastoglobule. This is an uncharacterized protein from Arabidopsis thaliana (Mouse-ear cress).